Consider the following 272-residue polypeptide: Orotidine 5'-phosphate decarboxylase (272 aa).

Lys-93 serves as the catalytic Proton donor.

Belongs to the OMP decarboxylase family. Type 2 subfamily.

It carries out the reaction orotidine 5'-phosphate + H(+) = UMP + CO2. The protein operates within pyrimidine metabolism; UMP biosynthesis via de novo pathway; UMP from orotate: step 2/2. This chain is Orotidine 5'-phosphate decarboxylase, found in Roseiflexus castenholzii (strain DSM 13941 / HLO8).